We begin with the raw amino-acid sequence, 513 residues long: GMP synthase [glutamine-hydrolyzing] (513 aa).

The 192-residue stretch at 7–198 (LIVVVDFGGQ…LFNIAGCRGD (192 aa)) folds into the Glutamine amidotransferase type-1 domain. Cys84 acts as the Nucleophile in catalysis. Catalysis depends on residues His172 and Glu174. In terms of domain architecture, GMPS ATP-PPase spans 199–388 (WTTESFITRQ…LGVPEEIVGR (190 aa)). 226 to 232 (SGGVDSS) serves as a coordination point for ATP.

As to quaternary structure, homodimer.

The catalysed reaction is XMP + L-glutamine + ATP + H2O = GMP + L-glutamate + AMP + diphosphate + 2 H(+). Its pathway is purine metabolism; GMP biosynthesis; GMP from XMP (L-Gln route): step 1/1. Catalyzes the synthesis of GMP from XMP. The protein is GMP synthase [glutamine-hydrolyzing] of Symbiobacterium thermophilum (strain DSM 24528 / JCM 14929 / IAM 14863 / T).